A 224-amino-acid chain; its full sequence is Tumor protein D52 (224 aa).

S36 and S40 each carry phosphoserine. Positions 62–114 (AATISATETLSEEEQEELRRELAKVEEEIQTLSQVLAAKEKHLAEIKRKLGIN) form a coiled coil. S176 carries the post-translational modification Phosphoserine. Residues 187-224 (KVGGTKPAGGDFGEVLNSAANASATTTEPLPEKTQESL) are disordered. Residues 203–213 (NSAANASATTT) are compositionally biased toward low complexity. The residue at position 223 (S223) is a Phosphoserine.

Belongs to the TPD52 family. As to quaternary structure, forms a homodimer or heterodimer with other members of the family. All isoforms interact with several 14-3-3 proteins. Isoform 2 is expressed in colon, breast, prostate, pancreas and kidney tumor cell lines. Isoform 2 is expressed at high levels in kidney, prostate, brain, small intestine and pancreas, at moderate levels in placenta and colon, at low levels in lung, liver and heart, and at very low levels in spleen, thymus, peripheral mononuclear blood cells, testis and ovary.

This chain is Tumor protein D52 (TPD52), found in Homo sapiens (Human).